We begin with the raw amino-acid sequence, 393 residues long: Probable acetyl-CoA acyltransferase (393 aa).

The active-site Acyl-thioester intermediate is the C88. Catalysis depends on proton acceptor residues H349 and C378.

It belongs to the thiolase-like superfamily. Thiolase family.

Its subcellular location is the cytoplasm. The catalysed reaction is 2 acetyl-CoA = acetoacetyl-CoA + CoA. The polypeptide is Probable acetyl-CoA acyltransferase (Staphylococcus aureus (strain Mu50 / ATCC 700699)).